A 101-amino-acid polypeptide reads, in one-letter code: MAKKSKIVQNERRREIVARHAERRAELKAIIKSPSTTPEARVAAQSELNRQPRDASPVRVRNRDSVDGRPRGHLRKFGLSRVRVRELAHQGQLPGVRKSSW.

The segment at 31-73 (IKSPSTTPEARVAAQSELNRQPRDASPVRVRNRDSVDGRPRGH) is disordered. The span at 61–70 (RNRDSVDGRP) shows a compositional bias: basic and acidic residues.

It belongs to the universal ribosomal protein uS14 family. As to quaternary structure, part of the 30S ribosomal subunit. Contacts proteins S3 and S10.

Binds 16S rRNA, required for the assembly of 30S particles and may also be responsible for determining the conformation of the 16S rRNA at the A site. The sequence is that of Small ribosomal subunit protein uS14A from Mycolicibacterium vanbaalenii (strain DSM 7251 / JCM 13017 / BCRC 16820 / KCTC 9966 / NRRL B-24157 / PYR-1) (Mycobacterium vanbaalenii).